The chain runs to 200 residues: uncharacterized protein (200 aa).

The tract at residues 1-21 (MSNSAQRDARNSRDESARASD) is disordered. Residues 7–21 (RDARNSRDESARASD) are compositionally biased toward basic and acidic residues.

This is an uncharacterized protein from Mycobacterium tuberculosis (strain ATCC 25618 / H37Rv).